A 165-amino-acid chain; its full sequence is S-ribosylhomocysteine lyase (165 aa).

Fe cation contacts are provided by histidine 54, histidine 58, and cysteine 128.

This sequence belongs to the LuxS family. Homodimer. Fe cation serves as cofactor.

It catalyses the reaction S-(5-deoxy-D-ribos-5-yl)-L-homocysteine = (S)-4,5-dihydroxypentane-2,3-dione + L-homocysteine. In terms of biological role, involved in the synthesis of autoinducer 2 (AI-2) which is secreted by bacteria and is used to communicate both the cell density and the metabolic potential of the environment. The regulation of gene expression in response to changes in cell density is called quorum sensing. Catalyzes the transformation of S-ribosylhomocysteine (RHC) to homocysteine (HC) and 4,5-dihydroxy-2,3-pentadione (DPD). The protein is S-ribosylhomocysteine lyase of Helicobacter hepaticus (strain ATCC 51449 / 3B1).